The sequence spans 128 residues: MNLIAKLEQEEIARALGEKTIPEFAPGDTVIVSVNVVEGTRKRVQAYEGVVIAKRNRGLNSSFIVRKISSGEGVERTFQTYSPLLASIVVKRRGDVRRAKLYYLRDRSGKSARIKEKLVSKGRAASQA.

Belongs to the bacterial ribosomal protein bL19 family.

This protein is located at the 30S-50S ribosomal subunit interface and may play a role in the structure and function of the aminoacyl-tRNA binding site. The chain is Large ribosomal subunit protein bL19 from Paraburkholderia xenovorans (strain LB400).